Consider the following 205-residue polypeptide: Ypt/Rab-type GTPase Rab7 (205 aa).

Residues 17-23, 33-40, glycine 66, 125-128, and 157-159 each bind GTP; these read SGVGKTS, FSASYKAT, NKID, and SAK. The short motif at 37 to 45 is the Effector region element; it reads YKATIGADF. 2 S-geranylgeranyl cysteine lipidation sites follow: cysteine 203 and cysteine 205. At cysteine 205 the chain carries Cysteine methyl ester.

Belongs to the small GTPase superfamily. Rab family.

It is found in the cell membrane. Alternates between an inactive form bound to GDP and an active form bound to GTP. Activated by guanine nucleotide-exchange factors (GEFs), and inactivated by GTPase-activating proteins (GAPs). Ypt/Rab-type GTPases are key regulators of membrane trafficking and intracellular vesicular transport. They act as molecular switches that convert between GTP-bound and GDP-bound states, and regulate virtually all steps of membrane traffic from the formation of the transport vesicle at the donor membrane to its fusion at the target membrane. In the GDP-bound state, Ypt proteins are predominantly cytosolic, solubilized through the interaction with a GDP dissociation inhibitor (GDI). In the GTP-bound state, the proteins are membrane bound and interact with specific effector proteins that select cargo, promote vesicle movement, or verify the correct site of fusion. The sequence is that of Ypt/Rab-type GTPase Rab7 (gtp-14) from Neurospora crassa (strain ATCC 24698 / 74-OR23-1A / CBS 708.71 / DSM 1257 / FGSC 987).